Consider the following 288-residue polypeptide: Protease HtpX homolog (288 aa).

The next 2 helical transmembrane spans lie at 7–27 and 29–49; these read TAVL…MLGG and QGML…YWFS. Residue His-131 coordinates Zn(2+). Residue Glu-132 is part of the active site. His-135 contacts Zn(2+). The next 2 membrane-spanning stretches (helical) occupy residues 141–161 and 177–197; these read ILIS…ANFA and IASL…QMSI. Glu-202 lines the Zn(2+) pocket.

The protein belongs to the peptidase M48B family. Requires Zn(2+) as cofactor.

The protein resides in the cell inner membrane. This chain is Protease HtpX homolog, found in Polynucleobacter necessarius subsp. necessarius (strain STIR1).